We begin with the raw amino-acid sequence, 65 residues long: Conotoxin VnMLCL-041 (65 aa).

Residues 1–19 (MLCLPVFIILLLLASPAAP) form the signal peptide. A propeptide spanning residues 20-43 (NPLQTRIQSNLIRAGPEDANIKTD) is cleaved from the precursor. Lys64 carries the lysine amide modification.

This sequence belongs to the conotoxin T superfamily. Expressed by the venom duct.

It localises to the secreted. The chain is Conotoxin VnMLCL-041 from Conus ventricosus (Mediterranean cone).